We begin with the raw amino-acid sequence, 126 residues long: uncharacterized protein (126 aa).

A run of 2 helical transmembrane segments spans residues 21–43 (LIVW…RIFS) and 48–70 (SVTF…LLLL).

The protein resides in the membrane. This is an uncharacterized protein from Saccharomyces cerevisiae (strain ATCC 204508 / S288c) (Baker's yeast).